A 41-amino-acid chain; its full sequence is Photosystem I reaction center subunit IX (41 aa).

A helical transmembrane segment spans residues 7–27 (YLSTAPVVATGWFIVTAALLI).

Belongs to the PsaJ family.

Its subcellular location is the plastid. It localises to the chloroplast thylakoid membrane. May help in the organization of the PsaE and PsaF subunits. This is Photosystem I reaction center subunit IX from Tetradesmus obliquus (Green alga).